The following is a 315-amino-acid chain: Phage tubulin-like protein (315 aa).

Residues glycine 13–threonine 14 and glycine 93–glycine 95 contribute to the GTP site.

It belongs to the FtsZ family. PhuZ subfamily. As to quaternary structure, homomultimer. Polymerizes in a strictly GTP-dependent manner.

The protein resides in the host cytoplasm. It catalyses the reaction GTP + H2O = GDP + phosphate + H(+). Its activity is regulated as follows. The non-hydrolyzable GTP analog GMPCPP stabilizes filaments, which never disassemble. Functionally, a tubulin-like GTPase that forms filaments, which are required for positioning viral DNA and capsids in the middle of the host cell for optimal replication. The motor component of a partition system which pushes phage DNA (encased by protein gp105) to the center of the bacterial host cell. Also required for movement of phage capsids to the vicinity of the DNA and rotation of the encased viral DNA at midcell. Forms filaments during the lytic phase, which position phage DNA at the center of the bacterial host cell. Filaments have a three-stranded intertwined architecture and form a spindle-like cytoskeleton within the infected cell. Has GTPase activity. Filaments grow at the plus end and depolymerize at the minus end, a process called treadmilling, and switch from growing in a polar manner to catastrophic depolymerization, i.e. they display dynamic instability, like tubulin. In infected host cells the filament ends close to the cell pole are relatively stable, while the other end near the phage DNA is highly dynamic. Both capsid movement and DNA rotation probably require treadmilling. This Pseudomonas aeruginosa (Pseudomonas aeruginosa phage PhiPA3) protein is Phage tubulin-like protein.